Consider the following 420-residue polypeptide: UDP-N-acetylglucosamine 1-carboxyvinyltransferase (420 aa).

Residue 22–23 participates in phosphoenolpyruvate binding; sequence KN. Arg-93 contributes to the UDP-N-acetyl-alpha-D-glucosamine binding site. Cys-117 functions as the Proton donor in the catalytic mechanism. Cys-117 carries the 2-(S-cysteinyl)pyruvic acid O-phosphothioketal modification. UDP-N-acetyl-alpha-D-glucosamine-binding residues include Asp-307 and Ile-329.

It belongs to the EPSP synthase family. MurA subfamily.

The protein localises to the cytoplasm. It carries out the reaction phosphoenolpyruvate + UDP-N-acetyl-alpha-D-glucosamine = UDP-N-acetyl-3-O-(1-carboxyvinyl)-alpha-D-glucosamine + phosphate. The protein operates within cell wall biogenesis; peptidoglycan biosynthesis. In terms of biological role, cell wall formation. Adds enolpyruvyl to UDP-N-acetylglucosamine. This is UDP-N-acetylglucosamine 1-carboxyvinyltransferase from Shewanella halifaxensis (strain HAW-EB4).